The primary structure comprises 384 residues: GDSL esterase/lipase ENOD8 (384 aa).

A signal peptide spans 1 to 31 (MKFMAKIELSRHIPLVTLIVLVLCITPPIFA). Serine 46 serves as the catalytic Nucleophile. N-linked (GlcNAc...) asparagine glycans are attached at residues asparagine 105, asparagine 191, asparagine 198, asparagine 276, and asparagine 330. Residues aspartate 349 and histidine 352 contribute to the active site.

The protein belongs to the 'GDSL' lipolytic enzyme family. In terms of tissue distribution, expressed in root nodules (at protein level).

It is found in the symbiosome. Functionally, has lipase and esterase activities. Probably involved in root nodule physiology. This Medicago truncatula (Barrel medic) protein is GDSL esterase/lipase ENOD8.